Here is a 160-residue protein sequence, read N- to C-terminus: Probable NADH dehydrogenase [ubiquinone] 1 beta subcomplex subunit 2, mitochondrial (160 aa).

Belongs to the complex I NDUFB2 subunit family. Complex I is composed of 45 different subunits.

It is found in the mitochondrion inner membrane. Functionally, accessory subunit of the mitochondrial membrane respiratory chain NADH dehydrogenase (Complex I), that is believed not to be involved in catalysis. Complex I functions in the transfer of electrons from NADH to the respiratory chain. The immediate electron acceptor for the enzyme is believed to be ubiquinone. This Caenorhabditis elegans protein is Probable NADH dehydrogenase [ubiquinone] 1 beta subcomplex subunit 2, mitochondrial.